Consider the following 345-residue polypeptide: uncharacterized protein (345 aa).

The protein belongs to the transketolase family. Requires thiamine diphosphate as cofactor.

This is an uncharacterized protein from Sinorhizobium fredii (strain NBRC 101917 / NGR234).